The following is an 816-amino-acid chain: Probable E3 ubiquitin-protein ligase hulA (816 aa).

A C2 domain is found at 1-112; that stretch reads MGSNLPAQPN…QMGGDEMLTR (112 aa). 2 disordered regions span residues 134–238 and 254–354; these read NLST…GWER and RTTT…YFVD. Over residues 160–178 the composition is skewed to low complexity; the sequence is VPQVAPSSSHPAASGAAPV. The segment covering 181 to 192 has biased composition (polar residues); sequence SASNPSLNPQRV. Residues 193 to 213 show a composition bias toward low complexity; it reads PSTTRPSSTAAPASAAGAAAS. Polar residues-rich tracts occupy residues 214 to 227 and 254 to 267; these read NTHGSRTNLSSFED and RTTTWTRPSSNYNE. In terms of domain architecture, WW 1 spans 230–263; that stretch reads GRLPAGWERREDNLGRTYYVDHNTRTTTWTRPSS. Basic and acidic residues predominate over residues 268–295; sequence HAQRSQREANMQLERRAHQSRMLPEDRT. Over residues 296–310 the composition is skewed to polar residues; it reads GANSPNLPESSQQAH. The span at 325 to 334 shows a compositional bias: low complexity; sequence ATGATTAGTG. WW domains follow at residues 334–367 and 394–427; these read GELPPGWEQRTTPEGRPYFVDHNTRTTTWVDPRR and GPLPSGWEMRLTNTARVYFVDHNTKTTTWDDPRL. Positions 483 to 816 constitute an HECT domain; that stretch reads SASDLKKRLM…VEETLGFGQE (334 aa). Residue Cys-784 is the Glycyl thioester intermediate of the active site.

Belongs to the RSP5/NEDD4 family. In terms of assembly, interacts with creD.

The protein localises to the cytoplasm. The enzyme catalyses S-ubiquitinyl-[E2 ubiquitin-conjugating enzyme]-L-cysteine + [acceptor protein]-L-lysine = [E2 ubiquitin-conjugating enzyme]-L-cysteine + N(6)-ubiquitinyl-[acceptor protein]-L-lysine.. It functions in the pathway protein modification; protein ubiquitination. Its function is as follows. E3 ubiquitin-protein ligase which accepts ubiquitin from an E2 ubiquitin-conjugating enzyme in the form of a thioester and then directly transfers the ubiquitin to targeted substrates. Probably involved in the regulatory network controlling carbon source utilization. In Neosartorya fischeri (strain ATCC 1020 / DSM 3700 / CBS 544.65 / FGSC A1164 / JCM 1740 / NRRL 181 / WB 181) (Aspergillus fischerianus), this protein is Probable E3 ubiquitin-protein ligase hulA (hulA).